The chain runs to 379 residues: tRNA-specific 2-thiouridylase MnmA (379 aa).

ATP is bound by residues 23–30 (AMSGGVDS) and Leu49. Residue Cys117 is the Nucleophile of the active site. An intrachain disulfide couples Cys117 to Cys214. Residue Gly141 coordinates ATP. The segment at 163-165 (RDQ) is interaction with tRNA. Cys214 serves as the catalytic Cysteine persulfide intermediate.

Belongs to the MnmA/TRMU family.

The protein resides in the cytoplasm. The catalysed reaction is S-sulfanyl-L-cysteinyl-[protein] + uridine(34) in tRNA + AH2 + ATP = 2-thiouridine(34) in tRNA + L-cysteinyl-[protein] + A + AMP + diphosphate + H(+). Functionally, catalyzes the 2-thiolation of uridine at the wobble position (U34) of tRNA, leading to the formation of s(2)U34. The sequence is that of tRNA-specific 2-thiouridylase MnmA from Cereibacter sphaeroides (strain ATCC 17023 / DSM 158 / JCM 6121 / CCUG 31486 / LMG 2827 / NBRC 12203 / NCIMB 8253 / ATH 2.4.1.) (Rhodobacter sphaeroides).